Here is a 453-residue protein sequence, read N- to C-terminus: Glutamate--tRNA ligase 2 (453 aa).

The 'HIGH' region motif lies at 10 to 20 (PSPTGFLHIGG). The 'KMSKS' region signature appears at 232–236 (KLSKR). Lys-235 contributes to the ATP binding site.

The protein belongs to the class-I aminoacyl-tRNA synthetase family. Glutamate--tRNA ligase type 1 subfamily. As to quaternary structure, monomer.

It is found in the cytoplasm. It catalyses the reaction tRNA(Glu) + L-glutamate + ATP = L-glutamyl-tRNA(Glu) + AMP + diphosphate. In terms of biological role, catalyzes the attachment of glutamate to tRNA(Glu) in a two-step reaction: glutamate is first activated by ATP to form Glu-AMP and then transferred to the acceptor end of tRNA(Glu). The sequence is that of Glutamate--tRNA ligase 2 from Wolbachia sp. subsp. Brugia malayi (strain TRS).